A 515-amino-acid chain; its full sequence is MEELQGYLEKDRSRQQHFLYPLLFQEYIYTLAYDHGLNGSIFYEPMEILSYDNKSSSVLVKHLITRMYQQNYLIYSINDSSQNRFVGHNNYFYSHFYSQMVSEGFAVIAEIPFSMRLVPSFEEKEIPKSQNLRSIHSIFPFLEDKLSHLNYVLDILIPYPIHLEILVQILQCRIQDVPSLHLLRLFLHEYHNWRSFITSNKSIYVFSKENKRLFRLLYNSYVSEYEFLFIYIRKQSYNLRPTSSRAFLERIHFYVKIEHFIIVCHNYFQKTLRFFKDSFMHYIRYQGKAILASRGTYLLIKKWKCYLVNFWQYYLYFWSKPYRIHINQLSNYSFYFMGYISSVLINPSAVKNQMLENLFLVDTVTKKFDTIVPVIPLIGSLSKAKFCTVAGHPISKPVWADLSDSDIIERFGRICRNLSHYHSGSSKKQSLYRIKYILRLSCARTLARKHKSTVRNLLQRLDSGLLEEFFTEEEQVICLILPKTTLFTLHGSHGERIWYLDIIRIDDLANSLDWS.

The protein belongs to the intron maturase 2 family. MatK subfamily.

It localises to the plastid. Its subcellular location is the chloroplast. Its function is as follows. Usually encoded in the trnK tRNA gene intron. Probably assists in splicing its own and other chloroplast group II introns. In Helonias bullata (Swamp pink), this protein is Maturase K.